The chain runs to 408 residues: L-lactate oxidase (408 aa).

The FMN hydroxy acid dehydrogenase domain maps to 14-370 (NEAIKMVNVD…KHADIRQINY (357 aa)). Y40 contacts pyruvate. FMN-binding positions include 93 to 95 (PIA), S122, and Q144. Y146 is a binding site for pyruvate. T172 is a binding site for FMN. Residue R181 participates in pyruvate binding. Residues K241 and S263 each contribute to the FMN site. Residues H265 and R268 each contribute to the pyruvate site. Residue H265 is the Proton acceptor of the active site. Residues 296 to 300 (DSGVR) and R320 each bind FMN.

This sequence belongs to the FMN-dependent alpha-hydroxy acid dehydrogenase family. Homotetramer. FMN is required as a cofactor.

It catalyses the reaction a (2S)-2-hydroxycarboxylate + O2 = a 2-oxocarboxylate + H2O2. The catalysed reaction is (S)-lactate + O2 = pyruvate + H2O2. The enzyme catalyses 2-hydroxyoctanoate + O2 = 2-oxooctanoate + H2O2. It carries out the reaction glycolate + O2 = glyoxylate + H2O2. It catalyses the reaction mandelate + O2 = phenylglyoxylate + H2O2. The catalysed reaction is 2-hydroxyoctadecanoate + O2 = 2-oxooctadecanoate + H2O2. In terms of biological role, oxidase that catalyzes the oxidation of a broad range of 2-hydroxyacids in vitro, such as (S)-lactate, 2-hydroxyoctanoate, and to a lesser extent glycolate, mandelate and 2-hydroxyoctadecanoate, to the corresponding 2-oxoacids, with a reduction of O2 to H2O2. May be involved in the utilization of L-lactate as an energy source for growth. This is L-lactate oxidase from Lactobacillus jensenii.